The primary structure comprises 147 residues: Deoxyuridine 5'-triphosphate nucleotidohydrolase (147 aa).

Arg-24 serves as a coordination point for Mg(2+). DUTP is bound by residues 68-70, 82-85, Tyr-88, Gly-93, Ile-95, and Arg-111; these read PRS and GVID.

The protein belongs to the dUTPase family.

It catalyses the reaction dUTP + H2O = dUMP + diphosphate + H(+). Its function is as follows. This enzyme is involved in nucleotide metabolism: it produces dUMP, the immediate precursor of thymidine nucleotides and it decreases the intracellular concentration of dUTP so that uracil cannot be incorporated into DNA. The polypeptide is Deoxyuridine 5'-triphosphate nucleotidohydrolase (OPG046) (Homo sapiens (Human)).